The sequence spans 546 residues: Peptidoglycan transport ATP-binding protein YejF (546 aa).

2 consecutive ABC transporter domains span residues 12-261 (VRDL…RHLL) and 291-530 (IKAG…KALL). Residues 46–53 (GESGSGKS) and 323–330 (GESGSGKT) each bind ATP.

This sequence belongs to the ABC transporter superfamily. As to quaternary structure, the complex is composed of one ATP-binding protein (YejF), two transmembrane proteins (YejB and YejE) and a solute-binding protein (YepA or YejA).

The protein localises to the cell inner membrane. Its function is as follows. Part of the ABC transporter complex YejBEF-YepA involved in the uptake of muropeptides, the breakdown products of cell wall peptidoglycan. The import of muropeptides into the cell enables peptidoglycan recycling, which is vital for cell wall integrity in this bacterium. Is also probably part of the ABC transporter complex YejABEF, which is likely involved in broad-spectrum peptide import. Responsible for energy coupling to the transport system. This chain is Peptidoglycan transport ATP-binding protein YejF, found in Agrobacterium fabrum (strain C58 / ATCC 33970) (Agrobacterium tumefaciens (strain C58)).